A 184-amino-acid polypeptide reads, in one-letter code: Calmodulin-related protein (184 aa).

EF-hand domains follow at residues 8–43, 44–79, 81–116, and 117–152; these read DQISEFKEAFSLFDKDGDGCITTKELGTVMRSLGQN, PTEAELQDMINEVDADGNGTIDFPEFLNLMARKMKD, DSEEELKEAFRVFDKDQNGFISAAELRHVMTNLGEK, and LTDEEVDEMIREADVDGDGQINYEEFVKVMMANRRR. Positions 21, 23, 25, 27, 32, 57, 59, 61, 63, 68, 94, 96, 98, and 105 each coordinate Ca(2+). Lys116 is modified (N6,N6,N6-trimethyllysine). Residues Asp130, Asp132, Asp134, Gln136, and Glu141 each contribute to the Ca(2+) site. The disordered stretch occupies residues 156–184; sequence EESKRSVNSNISRSNNGRKVRKRDRCTIL. A compositionally biased stretch (low complexity) spans 161–170; sequence SVNSNISRSN. Residues 171 to 184 show a composition bias toward basic residues; the sequence is NGRKVRKRDRCTIL.

Belongs to the calmodulin family.

Its function is as follows. Calmodulin mediates the control of a large number of enzymes, ion channels and other proteins by Ca(2+). Among the enzymes to be stimulated by the calmodulin-Ca(2+) complex are a number of protein kinases and phosphatases. This chain is Calmodulin-related protein (CAM53), found in Petunia hybrida (Petunia).